We begin with the raw amino-acid sequence, 438 residues long: 3-phosphoshikimate 1-carboxyvinyltransferase (438 aa).

The 3-phosphoshikimate site is built by Lys-21, Ser-22, and Arg-26. A phosphoenolpyruvate-binding site is contributed by Lys-21. 2 residues coordinate phosphoenolpyruvate: Gly-95 and Arg-123. 3-phosphoshikimate contacts are provided by Ser-167, Gln-169, Asp-315, and Lys-342. Gln-169 is a binding site for phosphoenolpyruvate. Asp-315 acts as the Proton acceptor in catalysis. Phosphoenolpyruvate contacts are provided by Arg-346 and Arg-387.

It belongs to the EPSP synthase family. Monomer.

It is found in the cytoplasm. The catalysed reaction is 3-phosphoshikimate + phosphoenolpyruvate = 5-O-(1-carboxyvinyl)-3-phosphoshikimate + phosphate. The protein operates within metabolic intermediate biosynthesis; chorismate biosynthesis; chorismate from D-erythrose 4-phosphate and phosphoenolpyruvate: step 6/7. Catalyzes the transfer of the enolpyruvyl moiety of phosphoenolpyruvate (PEP) to the 5-hydroxyl of shikimate-3-phosphate (S3P) to produce enolpyruvyl shikimate-3-phosphate and inorganic phosphate. In Coxiella burnetii (strain RSA 331 / Henzerling II), this protein is 3-phosphoshikimate 1-carboxyvinyltransferase.